The sequence spans 188 residues: GTPase KRas (188 aa).

Residues 10 to 18, 29 to 35, 59 to 60, and 116 to 119 each bind GTP; these read GAGGVGKSA, VDEYDPT, AG, and NKYD. Residues 32 to 40 carry the Effector region motif; that stretch reads YDPTIEDSY. A disordered region spans residues 167–188; sequence KEKMSKEGKKKKKKSKTKCILM. Cys185 carries the post-translational modification Cysteine methyl ester. The S-farnesyl cysteine moiety is linked to residue Cys185. A propeptide spans 186–188 (removed in mature form); sequence ILM.

It belongs to the small GTPase superfamily. Ras family.

It is found in the cell membrane. Its subcellular location is the cytoplasm. It catalyses the reaction GTP + H2O = GDP + phosphate + H(+). Its activity is regulated as follows. Alternates between an inactive form bound to GDP and an active form bound to GTP. Activated by a guanine nucleotide-exchange factor (GEF) and inactivated by a GTPase-activating protein (GAP). Ras proteins bind GDP/GTP and possess intrinsic GTPase activity. Plays an important role in the regulation of cell proliferation. May play a role in promoting oncogenic events by inducing transcriptional silencing of tumor suppressor genes (TSGs). This Kryptolebias marmoratus (Mangrove killifish) protein is GTPase KRas (kras).